The sequence spans 181 residues: MQCPYCQHTDSRVLESRSTGAGRSIRRRRECLSCKHRFTTYERIEFVPISVIKRNGQSEAFDRSKILRGMVRACEKTTVLPSTLEAIAEEIEAQLQQKPKRSITTAQIGDLVLHRLRQESEVAYVRFASVYRQFQGVDDFIETLSHLQDNAEQANLWIQTLNEDEESEDLTSPSVLTPSAN.

The segment at 3–34 is a zinc-finger region; it reads CPYCQHTDSRVLESRSTGAGRSIRRRRECLSC. In terms of domain architecture, ATP-cone spans 49–139; sequence ISVIKRNGQS…VYRQFQGVDD (91 aa).

This sequence belongs to the NrdR family. Zn(2+) is required as a cofactor.

In terms of biological role, negatively regulates transcription of bacterial ribonucleotide reductase nrd genes and operons by binding to NrdR-boxes. The polypeptide is Transcriptional repressor NrdR (Picosynechococcus sp. (strain ATCC 27264 / PCC 7002 / PR-6) (Agmenellum quadruplicatum)).